The chain runs to 175 residues: AKYDAFIAALTEALRVIAGAFEVHAVKPATEEVPAAKIPAGELQIVDKIDAAFKIAATAANSAPANDKFTVFEGAFNKAIKERHGGAYETYKFIPSLEASRSKQAYGATVARAPEVKYAVFEAGLTKAITAMSEAQKVAKPVRSVTAAAAGAATAAGGAATVAASRPTSAGGYKV.

Belongs to the Poa p IX/Phl p VI allergen family.

The polypeptide is Major pollen allergen Pha a 5.4 (Phalaris aquatica (Canary grass)).